The chain runs to 218 residues: Oocyte-specific homeobox protein 7 (218 aa).

The segment covering 40-72 (SPLVTPGSTMQSSLSVPERNLLQQESEGPSRQS) has biased composition (polar residues). Residues 40–77 (SPLVTPGSTMQSSLSVPERNLLQQESEGPSRQSGCMPL) form a disordered region. The segment at residues 94–153 (FRKERIVYSKEQQRLLQKHFDECQYPKEKKIVELAVLIGVTKMEIKKWFKNNRAKYRQMN) is a DNA-binding region (homeobox).

It belongs to the paired homeobox family. Obox subfamily. Specifically expressed in oocytes and early embryos.

It is found in the nucleus. In terms of biological role, transcription factor required for zygotic genome activation (ZGA), a critical event in early embryonic development during which the developmental control passes from maternally provided mRNAs to the expression of the zygotic genome after fertilization. Together with other Obox family members, required in early two-cell stage embryos to kick-start the major ZGA wave by facilitating RNA Polymerase II 'pre-configuration', during which RNA Polymerase II relocates from the initial one-cell stage binding targets to ZGA gene promoters and distal enhancers. Mechanistically, promotes recruitment of RNA Polymerase II from (CG-rich) non-ZGA genes to (CG-poor) ZGA genes at the two-cell stage. Binds to regulatory DNA sequences containing a 5'-ACNCCTTTAATCCCAG-3' sequence motif. Most maternal and zygotic Obox family proteins can compensate for one another. This is Oocyte-specific homeobox protein 7 from Mus musculus (Mouse).